The primary structure comprises 70 residues: Large ribosomal subunit protein bL31 (70 aa).

Cys16, Cys18, Cys37, and Cys40 together coordinate Zn(2+).

This sequence belongs to the bacterial ribosomal protein bL31 family. Type A subfamily. As to quaternary structure, part of the 50S ribosomal subunit. Requires Zn(2+) as cofactor.

Binds the 23S rRNA. The sequence is that of Large ribosomal subunit protein bL31 from Psychromonas ingrahamii (strain DSM 17664 / CCUG 51855 / 37).